The following is a 425-amino-acid chain: Na(+)/H(+) antiporter NhaA 1 (425 aa).

11 consecutive transmembrane segments (helical) span residues 20–40 (AGGV…NSPL), 65–85 (PHLW…GLEI), 102–122 (LPFI…LAVT), 131–151 (GWAI…ALLG), 160–180 (LFLT…IALA), 183–203 (ASIK…MMAM), 218–238 (FVLL…AGVL), 272–292 (FLIV…GFSL), 303–323 (IAAG…WAAV), 342–362 (LSVL…LAFA), and 373–393 (LGVI…LRFA).

This sequence belongs to the NhaA Na(+)/H(+) (TC 2.A.33) antiporter family.

The protein localises to the cell inner membrane. It catalyses the reaction Na(+)(in) + 2 H(+)(out) = Na(+)(out) + 2 H(+)(in). Na(+)/H(+) antiporter that extrudes sodium in exchange for external protons. This chain is Na(+)/H(+) antiporter NhaA 1, found in Novosphingobium aromaticivorans (strain ATCC 700278 / DSM 12444 / CCUG 56034 / CIP 105152 / NBRC 16084 / F199).